Consider the following 640-residue polypeptide: Isoniazid-induced protein IniA (640 aa).

Residues 497-519 (IGMLSSVVGLGLFNPLSVGAGLI) form a helical membrane-spanning segment. Positions 560-628 (RDRLKMIQRL…QVNDNLAGLE (69 aa)) form a coiled coil.

Forms multimeric structures containing a central pore.

It is found in the cell membrane. Functionally, participates in the development of tolerance to both isoniazid and ethambutol. May function through a MDR-pump like mechanism, although it does not appear to directly transport isoniazid from the cell. The polypeptide is Isoniazid-induced protein IniA (iniA) (Mycobacterium tuberculosis (strain CDC 1551 / Oshkosh)).